Here is a 49-residue protein sequence, read N- to C-terminus: Small, acid-soluble spore protein O (49 aa).

Residues 1-49 are disordered; that stretch reads MGKRKANHTISGMNAASAQGQGTGYNEEFANEPLTPAERQNNKKRKKNQ. Polar residues predominate over residues 8-20; it reads HTISGMNAASAQG.

Belongs to the SspO family.

It localises to the spore core. The sequence is that of Small, acid-soluble spore protein O from Bacillus cereus (strain B4264).